Here is a 333-residue protein sequence, read N- to C-terminus: Foldase protein PrsA (333 aa).

The N-terminal stretch at 1–22 is a signal peptide; the sequence is MKKSTKLLAGIVTLASAMTLAA. C23 is lipidated: N-palmitoyl cysteine. C23 carries S-diacylglycerol cysteine lipidation. One can recognise a PpiC domain in the interval 145-240; sequence TPEMTTQVTT…NKFYIVKVTK (96 aa). The segment at 301-333 is disordered; that stretch reads DKKASKANTSKSDQKSSSDSSKDSQSSKSKSEK. Residues 312 to 322 show a composition bias toward basic and acidic residues; the sequence is SDQKSSSDSSK. Residues 323-333 are compositionally biased toward low complexity; it reads DSQSSKSKSEK.

Belongs to the PrsA family.

It localises to the cell membrane. It carries out the reaction [protein]-peptidylproline (omega=180) = [protein]-peptidylproline (omega=0). Functionally, plays a major role in protein secretion by helping the post-translocational extracellular folding of several secreted proteins. In Streptococcus equi subsp. equi (strain 4047), this protein is Foldase protein PrsA.